The sequence spans 31 residues: Electron transfer flavoprotein-ubiquinone oxidoreductase (31 aa).

FAD is bound at residue 11-25 (VVIVGAGGAGLSAAI).

In terms of assembly, monomer. [4Fe-4S] cluster serves as cofactor. The cofactor is FAD.

It carries out the reaction a ubiquinone + reduced [electron-transfer flavoprotein] = a ubiquinol + oxidized [electron-transfer flavoprotein] + H(+). Accepts electrons from ETF and reduces ubiquinone. In Paracoccus denitrificans, this protein is Electron transfer flavoprotein-ubiquinone oxidoreductase.